A 505-amino-acid chain; its full sequence is Ribose import ATP-binding protein RbsA 1 (505 aa).

ABC transporter domains lie at leucine 13 to aspartate 249 and tyrosine 254 to alanine 503. Glycine 45–serine 52 is a binding site for ATP.

Belongs to the ABC transporter superfamily. Ribose importer (TC 3.A.1.2.1) family. In terms of assembly, the complex is composed of an ATP-binding protein (RbsA), two transmembrane proteins (RbsC) and a solute-binding protein (RbsB).

The protein localises to the cell membrane. It carries out the reaction D-ribose(out) + ATP + H2O = D-ribose(in) + ADP + phosphate + H(+). Functionally, part of the ABC transporter complex RbsABC involved in ribose import. Responsible for energy coupling to the transport system. The polypeptide is Ribose import ATP-binding protein RbsA 1 (Streptomyces coelicolor (strain ATCC BAA-471 / A3(2) / M145)).